The sequence spans 32 residues: Photosystem II reaction center protein T (32 aa).

The helical transmembrane segment at 3 to 23 (TLVYTFLLIGTLAVLFAAVFF) threads the bilayer.

It belongs to the PsbT family. As to quaternary structure, PSII is composed of 1 copy each of membrane proteins PsbA, PsbB, PsbC, PsbD, PsbE, PsbF, PsbH, PsbI, PsbJ, PsbK, PsbL, PsbM, PsbT, PsbX, PsbY, PsbZ, Psb30/Ycf12, at least 3 peripheral proteins of the oxygen-evolving complex and a large number of cofactors. It forms dimeric complexes.

The protein localises to the plastid. Its subcellular location is the chloroplast thylakoid membrane. Found at the monomer-monomer interface of the photosystem II (PS II) dimer, plays a role in assembly and dimerization of PSII. PSII is a light-driven water plastoquinone oxidoreductase, using light energy to abstract electrons from H(2)O, generating a proton gradient subsequently used for ATP formation. The chain is Photosystem II reaction center protein T from Guillardia theta (Cryptophyte).